The chain runs to 160 residues: uncharacterized protein (160 aa).

Zn(2+) contacts are provided by Cys-26, Cys-28, Cys-50, and His-61. The segment at 26 to 69 (CWCGEEIITFTSKTKENPYRRFYRCAIAMKRENEEHLFKWVDEA) adopts a GRF-type; atypical zinc-finger fold.

This is an uncharacterized protein from Arabidopsis thaliana (Mouse-ear cress).